We begin with the raw amino-acid sequence, 352 residues long: Heat-inducible transcription repressor HrcA (352 aa).

The protein belongs to the HrcA family.

In terms of biological role, negative regulator of class I heat shock genes (grpE-dnaK-dnaJ and groELS operons). Prevents heat-shock induction of these operons. In Ralstonia nicotianae (strain ATCC BAA-1114 / GMI1000) (Ralstonia solanacearum), this protein is Heat-inducible transcription repressor HrcA.